A 209-amino-acid chain; its full sequence is Redox-sensing transcriptional repressor Rex (209 aa).

The H-T-H motif DNA-binding region spans 16–55; sequence LYYRFIQNLSLSGKQRVSSAELSEAVKVDSATIRRDFSYF. Position 90-95 (90-95) interacts with NAD(+); sequence GVGNLG.

This sequence belongs to the transcriptional regulatory Rex family. In terms of assembly, homodimer.

It localises to the cytoplasm. In terms of biological role, modulates transcription in response to changes in cellular NADH/NAD(+) redox state. In Bacillus cereus (strain AH187), this protein is Redox-sensing transcriptional repressor Rex.